We begin with the raw amino-acid sequence, 138 residues long: Aspartate 1-decarboxylase (138 aa).

The active-site Schiff-base intermediate with substrate; via pyruvic acid is serine 25. The residue at position 25 (serine 25) is a Pyruvic acid (Ser). Residue threonine 57 coordinates substrate. The Proton donor role is filled by tyrosine 58. Position 73–75 (73–75 (GAA)) interacts with substrate.

It belongs to the PanD family. Heterooctamer of four alpha and four beta subunits. It depends on pyruvate as a cofactor. Post-translationally, is synthesized initially as an inactive proenzyme, which is activated by self-cleavage at a specific serine bond to produce a beta-subunit with a hydroxyl group at its C-terminus and an alpha-subunit with a pyruvoyl group at its N-terminus.

The protein localises to the cytoplasm. The catalysed reaction is L-aspartate + H(+) = beta-alanine + CO2. It functions in the pathway cofactor biosynthesis; (R)-pantothenate biosynthesis; beta-alanine from L-aspartate: step 1/1. Functionally, catalyzes the pyruvoyl-dependent decarboxylation of aspartate to produce beta-alanine. This is Aspartate 1-decarboxylase from Renibacterium salmoninarum (strain ATCC 33209 / DSM 20767 / JCM 11484 / NBRC 15589 / NCIMB 2235).